Consider the following 507-residue polypeptide: MFIENFKVESPNVKYTDHEIHSVYDYETTELVHENRNGTYQWIVKPKTVKYEFKTDVHVPKLGVMLVGWGGNNGSTLTGGVIANREGICWATKDTVQQANYFGSLTQASAIRVGSYNGEEIYAPFKSILPMVNPDDIVFGGWDISDMNLADAMARARVFDIDLQKQLRPYMESMVPLPGIYDPDFIAANQGSRANNVIKGTKKEQMLQIIKDIREFKEKNKVDRVVVLWTANTERYSNVIVGLNDTVESLLASLDKNEAEISPSTLYAIACVLENIPFINGSPQNTFVPGLIDLAIRRNCLIGGDDFKSGQTKMKSVLVDFLVGAGIKPTSIVSYNHLGNNDGMNLSAPQTFRSKEISKSNVVDDMVSSNVFFMGLVNTRPRWIKYVPYVAIERAMDEYTSEIFMGGKSTIVLHNTCEDSLLAAPIILDLVLLAELSTRIQLKAEGEGKFHSFHPVATILSYLTKAPLVPPGTPVVNALSKQRAMLENILRACVGLAPENNMILEYK.

NAD(+)-binding residues include Gly-70, Gly-71, Asn-72, Asn-73, Asp-143, Ile-180, Gln-190, Arg-193, Thr-230, Ala-231, Asn-232, Thr-233, Gly-281, Ser-282, Asp-306, Ser-309, Asn-340, Asn-341, Asp-342, Lys-355, Ala-391, Asp-419, and Ser-420.

The protein belongs to the myo-inositol 1-phosphate synthase family. It depends on NAD(+) as a cofactor.

It is found in the cytoplasm. It localises to the cytosol. The protein resides in the nucleus. It carries out the reaction D-glucose 6-phosphate = 1D-myo-inositol 3-phosphate. The protein operates within polyol metabolism; myo-inositol biosynthesis; myo-inositol from D-glucose 6-phosphate: step 1/2. Its function is as follows. Key enzyme in myo-inositol biosynthesis pathway that catalyzes the conversion of glucose 6-phosphate to 1-myo-inositol 1-phosphate in a NAD-dependent manner. This Citrus paradisi (Grapefruit) protein is Inositol-3-phosphate synthase.